Consider the following 118-residue polypeptide: Small ribosomal subunit protein uS13 (118 aa).

The interval 95 to 118 (LPVRGQRTRTNARTRKGPKKLINK) is disordered.

Belongs to the universal ribosomal protein uS13 family. Part of the 30S ribosomal subunit. Forms a loose heterodimer with protein S19. Forms two bridges to the 50S subunit in the 70S ribosome.

Its function is as follows. Located at the top of the head of the 30S subunit, it contacts several helices of the 16S rRNA. In the 70S ribosome it contacts the 23S rRNA (bridge B1a) and protein L5 of the 50S subunit (bridge B1b), connecting the 2 subunits; these bridges are implicated in subunit movement. Contacts the tRNAs in the A and P-sites. This Blochmanniella floridana protein is Small ribosomal subunit protein uS13.